We begin with the raw amino-acid sequence, 155 residues long: Ribosome maturation factor RimP (155 aa).

The protein belongs to the RimP family.

The protein localises to the cytoplasm. Required for maturation of 30S ribosomal subunits. In Staphylococcus epidermidis (strain ATCC 35984 / DSM 28319 / BCRC 17069 / CCUG 31568 / BM 3577 / RP62A), this protein is Ribosome maturation factor RimP.